The following is a 272-amino-acid chain: Shikimate dehydrogenase (NADP(+)) (272 aa).

Shikimate contacts are provided by residues 14–16 (SKS) and Thr-61. Catalysis depends on Lys-65, which acts as the Proton acceptor. Residue Glu-77 coordinates NADP(+). Shikimate is bound by residues Asn-86 and Asp-102. NADP(+)-binding positions include 126-130 (GAGGA), 149-154 (NRTVSR), and Met-213. Position 215 (Tyr-215) interacts with shikimate. Position 237 (Gly-237) interacts with NADP(+).

It belongs to the shikimate dehydrogenase family. As to quaternary structure, homodimer.

It carries out the reaction shikimate + NADP(+) = 3-dehydroshikimate + NADPH + H(+). It functions in the pathway metabolic intermediate biosynthesis; chorismate biosynthesis; chorismate from D-erythrose 4-phosphate and phosphoenolpyruvate: step 4/7. Functionally, involved in the biosynthesis of the chorismate, which leads to the biosynthesis of aromatic amino acids. Catalyzes the reversible NADPH linked reduction of 3-dehydroshikimate (DHSA) to yield shikimate (SA). The protein is Shikimate dehydrogenase (NADP(+)) of Shigella boydii serotype 4 (strain Sb227).